The following is a 590-amino-acid chain: J protein JJJ1 (590 aa).

Residues 3 to 72 enclose the J domain; the sequence is TCYYELLGVE…RAWYDSHKEQ (70 aa). Positions 269-284 are enriched in basic and acidic residues; sequence EQRKLKEQQRKNELNN. The disordered stretch occupies residues 269-293; that stretch reads EQRKLKEQQRKNELNNRRKFGNDNN. The C2H2-type 1 zinc finger occupies 338-362; that stretch reads YECFICNKTFKSEKQLKNHINTKLH. Ser393 bears the Phosphoserine mark. A disordered region spans residues 441-546; that stretch reads EVEDVSSDEN…TLPSSMSPTS (106 aa). Over residues 455–467 the composition is skewed to basic residues; that stretch reads TKNKKKRKKKKKA. Residues 480-489 are compositionally biased toward basic and acidic residues; sequence DDTKDKRSNE. At Thr504 the chain carries Phosphothreonine. A compositionally biased stretch (basic residues) spans 513–527; the sequence is KAKKKKGKQPKKNSK. Low complexity predominate over residues 528–546; it reads STKSTPSLSTLPSSMSPTS. Residues 549-573 form a C2H2-type 2 zinc finger; sequence EVCTTCGESFDSRNKLFNHVKIAGH.

It is found in the nucleus. This is J protein JJJ1 (JJJ1) from Saccharomyces cerevisiae (strain ATCC 204508 / S288c) (Baker's yeast).